The primary structure comprises 81 residues: uncharacterized protein (81 aa).

It belongs to the ycf70 family.

The protein resides in the plastid. It is found in the chloroplast. This is an uncharacterized protein from Saccharum officinarum (Sugarcane).